The following is a 378-amino-acid chain: Succinyl-diaminopimelate desuccinylase 2 (378 aa).

Histidine 68 contacts Zn(2+). Aspartate 70 is a catalytic residue. Aspartate 101 is a binding site for Zn(2+). The Proton acceptor role is filled by glutamate 135. Zn(2+) contacts are provided by glutamate 136, glutamate 164, and histidine 350.

This sequence belongs to the peptidase M20A family. DapE subfamily. As to quaternary structure, homodimer. Requires Zn(2+) as cofactor. Co(2+) serves as cofactor.

The enzyme catalyses N-succinyl-(2S,6S)-2,6-diaminopimelate + H2O = (2S,6S)-2,6-diaminopimelate + succinate. Its pathway is amino-acid biosynthesis; L-lysine biosynthesis via DAP pathway; LL-2,6-diaminopimelate from (S)-tetrahydrodipicolinate (succinylase route): step 3/3. Functionally, catalyzes the hydrolysis of N-succinyl-L,L-diaminopimelic acid (SDAP), forming succinate and LL-2,6-diaminopimelate (DAP), an intermediate involved in the bacterial biosynthesis of lysine and meso-diaminopimelic acid, an essential component of bacterial cell walls. This Alteromonas mediterranea (strain DSM 17117 / CIP 110805 / LMG 28347 / Deep ecotype) protein is Succinyl-diaminopimelate desuccinylase 2.